Here is a 604-residue protein sequence, read N- to C-terminus: Sulfite reductase [NADPH] flavoprotein alpha-component (604 aa).

Residues 65-203 (VTILYGSQTG…AAGQWHADVL (139 aa)) form the Flavodoxin-like domain. FMN contacts are provided by residues 71 to 76 (SQTGNG), 118 to 121 (STHG), and 154 to 163 (LGDSSYEFFC). The FAD-binding FR-type domain maps to 236–453 (QNPYSAEVLV…VEPNKHFRLP (218 aa)). FAD contacts are provided by residues T324, L358, 392–395 (RLYS), 410–412 (TVA), and 425–428 (GGAS). Residues 524 to 525 (SR), 530 to 534 (KIYVQ), and D566 each bind NADP(+). Y604 provides a ligand contact to FAD.

The protein belongs to the NADPH-dependent sulphite reductase flavoprotein subunit CysJ family. This sequence in the N-terminal section; belongs to the flavodoxin family. It in the C-terminal section; belongs to the flavoprotein pyridine nucleotide cytochrome reductase family. Alpha(8)-beta(8). The alpha component is a flavoprotein, the beta component is a hemoprotein. FAD serves as cofactor. It depends on FMN as a cofactor.

The catalysed reaction is hydrogen sulfide + 3 NADP(+) + 3 H2O = sulfite + 3 NADPH + 4 H(+). Its pathway is sulfur metabolism; hydrogen sulfide biosynthesis; hydrogen sulfide from sulfite (NADPH route): step 1/1. In terms of biological role, component of the sulfite reductase complex that catalyzes the 6-electron reduction of sulfite to sulfide. This is one of several activities required for the biosynthesis of L-cysteine from sulfate. The flavoprotein component catalyzes the electron flow from NADPH -&gt; FAD -&gt; FMN to the hemoprotein component. The chain is Sulfite reductase [NADPH] flavoprotein alpha-component from Shewanella sp. (strain MR-7).